Consider the following 239-residue polypeptide: Seed lectin beta chain (239 aa).

Positions 88 and 106 each coordinate D-glucose. Glu126 and Asp128 together coordinate Mn(2+). Ca(2+)-binding residues include Asp128, Asn132, and Asp137. Asp137 and His142 together coordinate Mn(2+). Gly217 and Ala218 together coordinate D-glucose.

The protein belongs to the leguminous lectin family. Tetramer consisting of heterodimers of alpha and beta chains.

Its function is as follows. Galactose-binding lectin. Agglutinates human erythrocytes, and requires Ca(2+) and Mn(2+) ions for full agglutinating activity. Has antifungal activity against Fusarium sp., A.niger and A.flavus. This is Seed lectin beta chain from Spatholobus parviflorus (Butea parviflora).